Reading from the N-terminus, the 85-residue chain is Beta-insect depressant toxin Lqh-dprIT3f (85 aa).

The N-terminal stretch at 1–21 is a signal peptide; that stretch reads MKLLLLLTISASMLIEGLVNA. The 61-residue stretch at 22 to 82 folds into the LCN-type CS-alpha/beta domain; that stretch reads DGYIRGGDGC…EWDYETDTCG (61 aa). 4 disulfide bridges follow: Cys-31/Cys-81, Cys-35/Cys-56, Cys-42/Cys-63, and Cys-46/Cys-65. Glycine amide is present on Gly-82.

The protein belongs to the long (4 C-C) scorpion toxin superfamily. Sodium channel inhibitor family. Beta subfamily. In terms of tissue distribution, expressed by the venom gland.

The protein resides in the secreted. Functionally, depressant insect beta-toxins cause a transient contraction paralysis followed by a slow flaccid paralysis. They bind voltage-independently at site-4 of sodium channels (Nav) and block action potentials, primarily by depolarizing the axonal membrane and suppressing the sodium current. This depressant toxin is active only on insects. It is found in a relatively small amount in the venom. The sequence is that of Beta-insect depressant toxin Lqh-dprIT3f from Leiurus hebraeus (Hebrew deathstalker scorpion).